Consider the following 274-residue polypeptide: Putative deoxyribonuclease TATDN1 homolog (274 aa).

Glu-105, His-139, His-162, and Asp-208 together coordinate a divalent metal cation.

This sequence belongs to the metallo-dependent hydrolases superfamily. TatD-type hydrolase family. A divalent metal cation is required as a cofactor.

The protein resides in the nucleus. Putative deoxyribonuclease. This chain is Putative deoxyribonuclease TATDN1 homolog, found in Enterocytozoon bieneusi (strain H348) (Microsporidian parasite).